The primary structure comprises 577 residues: Cell pattern formation-associated protein stuA (577 aa).

The segment at 1–41 (MNQPQPYMDQHAPAPPPASNMTQYSNYGAPQPLQPATHGYG) is disordered. The span at 19-28 (SNMTQYSNYG) shows a compositional bias: polar residues. The HTH APSES-type domain occupies 111–217 (RVTATLWEDE…HNIGALLYHP (107 aa)). A DNA-binding region (H-T-H motif) is located at residues 145–166 (GTKLLNVAGMTRGRRDGILKSE). Disordered stretches follow at residues 228 to 487 (ATMA…QLPS) and 518 to 577 (QYPA…AVRR). 2 stretches are compositionally biased toward polar residues: residues 238 to 251 (SQEY…TQAP) and 319 to 333 (AVNS…SQGM). The segment covering 334-350 (PQYQTSQPPYTQSYSTP) has biased composition (low complexity). The span at 351-364 (GSYSQPQYTHQQPG) shows a compositional bias: polar residues. Basic and acidic residues predominate over residues 390 to 399 (AENDHPDHKV). The segment covering 465-479 (TPRTTNPYTGYNNTP) has biased composition (low complexity). The segment at 526 to 552 (KRGREDDDQVDPYGRPSSALGEHKRQR) is nuclear localization domain.

It belongs to the EFG1/PHD1/stuA family.

The protein resides in the nucleus. Functionally, transcription factor that regulates asexual reproduction. Binds the StuA-response elements (StRE) with the consensus sequence 5'-(A/T)CGCG(T/A)N(A/C)-3' at the promoters of target genes. This Dothistroma septosporum (strain NZE10 / CBS 128990) (Red band needle blight fungus) protein is Cell pattern formation-associated protein stuA.